The following is a 350-amino-acid chain: Probable arabinogalactan endo-beta-1,4-galactanase A (350 aa).

The first 16 residues, 1 to 16 (MIYSLLLSALPLLSSA), serve as a signal peptide directing secretion. Asn128 is a glycosylation site (N-linked (GlcNAc...) asparagine). The Proton donor role is filled by Glu152. Glu262 functions as the Nucleophile in the catalytic mechanism.

This sequence belongs to the glycosyl hydrolase 53 family.

The protein resides in the secreted. It catalyses the reaction The enzyme specifically hydrolyzes (1-&gt;4)-beta-D-galactosidic linkages in type I arabinogalactans.. In terms of biological role, endogalactanase involved in the degradation of plant cell wall polysaccharides, and more particularly of hairy regions of pectin. This is Probable arabinogalactan endo-beta-1,4-galactanase A (galA) from Aspergillus niger (strain ATCC MYA-4892 / CBS 513.88 / FGSC A1513).